The chain runs to 248 residues: Pyridoxine 5'-phosphate synthase (248 aa).

Asn12 contributes to the 3-amino-2-oxopropyl phosphate binding site. A 1-deoxy-D-xylulose 5-phosphate-binding site is contributed by 14 to 15 (DH). Arg23 lines the 3-amino-2-oxopropyl phosphate pocket. His48 serves as the catalytic Proton acceptor. Positions 50 and 55 each coordinate 1-deoxy-D-xylulose 5-phosphate. Glu75 (proton acceptor) is an active-site residue. Thr105 provides a ligand contact to 1-deoxy-D-xylulose 5-phosphate. His196 acts as the Proton donor in catalysis. Residues Gly197 and 218-219 (GH) contribute to the 3-amino-2-oxopropyl phosphate site.

The protein belongs to the PNP synthase family. Homooctamer; tetramer of dimers.

It localises to the cytoplasm. The catalysed reaction is 3-amino-2-oxopropyl phosphate + 1-deoxy-D-xylulose 5-phosphate = pyridoxine 5'-phosphate + phosphate + 2 H2O + H(+). The protein operates within cofactor biosynthesis; pyridoxine 5'-phosphate biosynthesis; pyridoxine 5'-phosphate from D-erythrose 4-phosphate: step 5/5. Its function is as follows. Catalyzes the complicated ring closure reaction between the two acyclic compounds 1-deoxy-D-xylulose-5-phosphate (DXP) and 3-amino-2-oxopropyl phosphate (1-amino-acetone-3-phosphate or AAP) to form pyridoxine 5'-phosphate (PNP) and inorganic phosphate. This Pseudomonas aeruginosa (strain LESB58) protein is Pyridoxine 5'-phosphate synthase.